A 1264-amino-acid chain; its full sequence is Imitation switch two complex protein 1 (1264 aa).

The WAC domain occupies 23 to 130 (VQVWHIEETG…GEVVYLRKQK (108 aa)). Disordered regions lie at residues 130-153 (KDSS…VEIN), 275-374 (PVVA…PANA), 482-508 (QEIE…NPSD), 627-655 (ATEV…SEER), and 803-825 (LNKT…SESN). The span at 132–147 (SSTTSSNSQQSTPQPD) shows a compositional bias: low complexity. 2 stretches are compositionally biased toward polar residues: residues 280–289 (RSNSANVSSP) and 299–310 (KSSGKSNTSNDA). Residues 423–483 (FDSFGKLLQA…IRTQTSKEQE (61 aa)) form the DDT domain.

Component of the ISW2 complex, which at least consists of ISW2, ITC1, DLS1 and DPB4. May form a stable subcomplex with ISW2.

It localises to the nucleus. In terms of biological role, functions as a component of the ISW2 complex, which acts in remodeling the chromatin by catalyzing an ATP-dependent alteration in the structure of nucleosomal DNA. The ISW2 complex is involved in coordinating transcriptional repression and in inheritance of telomeric silencing. It is involved in repression of MAT a-specific genes, INO1, and early meiotic genes during mitotic growth dependent upon transcription factor UME6 and in a parallel pathway to the RPD3-SIN3 histone deacetylase complex. ITC1 is required for nucleosome-stimulated ATPase activity and chromatin-remodeling activity of the complex. Required for the repression of MATa a-specific genes. The chain is Imitation switch two complex protein 1 (ITC1) from Saccharomyces cerevisiae (strain ATCC 204508 / S288c) (Baker's yeast).